The sequence spans 101 residues: MTLFSSISSMSTSMSGSKSSISSFGSGTGMGSNSIACGGGCGGSGGILGSGLGLGLGLGLDLTGGSRSRGACGGNGGNRGNGNGGMGGGNGSCCGGPCCGI.

The tract at residues 1–26 (MTLFSSISSMSTSMSGSKSSISSFGS) is disordered.

Belongs to the hssA/B family.

This Dictyostelium discoideum (Social amoeba) protein is HssA/B-like protein 40 (hssl40).